The sequence spans 185 residues: Regulatory protein RecX (185 aa).

The protein belongs to the RecX family.

The protein localises to the cytoplasm. In terms of biological role, modulates RecA activity. The polypeptide is Regulatory protein RecX (Thermobifida fusca (strain YX)).